Reading from the N-terminus, the 22-residue chain is Caerin-3.2 (22 aa).

The residue at position 22 (Lys-22) is a Lysine amide.

Expressed by the skin parotoid and/or rostral glands.

It localises to the secreted. Antibacterial peptide, that adopts an alpha helical conformation which can disrupt bacterial membranes. Each caerin displays a different antimicrobial specificity. This Ranoidea caerulea (Green tree frog) protein is Caerin-3.2.